Consider the following 120-residue polypeptide: UPF0145 protein Bcenmc03_5217 (120 aa).

Belongs to the UPF0145 family.

In Burkholderia orbicola (strain MC0-3), this protein is UPF0145 protein Bcenmc03_5217.